The primary structure comprises 100 residues: RxLR effector protein Avrblb2 (100 aa).

Positions 1–22 are cleaved as a signal peptide; the sequence is MRSFLYGVLAFAVLARSSAVAA. Residues 43-57 carry the RxLR-dEER motif; the sequence is RSLRIEAQEVIQSGR. The Calmodulin-binding motif signature appears at 78 to 82; the sequence is RPDIK.

This sequence belongs to the RxLR effector family. Interacts with the host papain-like cysteine protease C14. Interacts with the host calmodulin.

Its subcellular location is the secreted. The protein localises to the host cell membrane. In terms of biological role, secreted effector that acts as an elicitor of hypersensitive response (HR) specifically on plants carrying defense protein Rpi-blb2. Enhances P.infestans colonization of Nicotiana benthamiana leaves. Interacts with, and subsequently prevents secretion into the apoplast of the host papain-like cysteine protease C14, thus promoting virulence by interfering with the execution of host defenses. Associates with calmodulin at the host plasma membrane to interfere with plant defense-associated calcium signaling in hosts. This chain is RxLR effector protein Avrblb2, found in Phytophthora infestans (strain T30-4) (Potato late blight agent).